The following is a 102-amino-acid chain: MQKIRKGDNVVVLTGKDKGRTGEVIQVMPKEDRAVVRGVNMVKRHQRQTQAQEAGIINKEASLHISNIAIVDKDGKPTRVGFSVVDGKKVRVAKRSGEVIDG.

The protein belongs to the universal ribosomal protein uL24 family. As to quaternary structure, part of the 50S ribosomal subunit.

In terms of biological role, one of two assembly initiator proteins, it binds directly to the 5'-end of the 23S rRNA, where it nucleates assembly of the 50S subunit. Its function is as follows. One of the proteins that surrounds the polypeptide exit tunnel on the outside of the subunit. The protein is Large ribosomal subunit protein uL24 of Agrobacterium fabrum (strain C58 / ATCC 33970) (Agrobacterium tumefaciens (strain C58)).